Consider the following 123-residue polypeptide: Small ribosomal subunit protein uS12cz/uS12cy (123 aa).

This sequence belongs to the universal ribosomal protein uS12 family. As to quaternary structure, part of the 30S ribosomal subunit.

It localises to the plastid. It is found in the chloroplast. In terms of biological role, with S4 and S5 plays an important role in translational accuracy. Located at the interface of the 30S and 50S subunits. The protein is Small ribosomal subunit protein uS12cz/uS12cy (rps12-A) of Phaseolus vulgaris (Kidney bean).